Reading from the N-terminus, the 249-residue chain is Thioesterase TesA (249 aa).

Active-site residues include serine 92, aspartate 196, and histidine 224.

It belongs to the thioesterase family.

The enzyme catalyses a fatty acyl-CoA + H2O = a fatty acid + CoA + H(+). Involved in the synthesis of both phthiocerol dimycocerosates (PDIMs) and phenolic glycolipids (PGLs), which are structurally related lipids non-covalently bound to the outer cell wall layer of M.tuberculosis and are important virulence factors. The chain is Thioesterase TesA from Mycobacterium marinum (strain ATCC BAA-535 / M).